We begin with the raw amino-acid sequence, 355 residues long: Protein RecA (355 aa).

An ATP-binding site is contributed by 65-72 (GPESSGKT).

This sequence belongs to the RecA family.

Its subcellular location is the cytoplasm. In terms of biological role, can catalyze the hydrolysis of ATP in the presence of single-stranded DNA, the ATP-dependent uptake of single-stranded DNA by duplex DNA, and the ATP-dependent hybridization of homologous single-stranded DNAs. It interacts with LexA causing its activation and leading to its autocatalytic cleavage. The polypeptide is Protein RecA (Pseudomonas putida (strain ATCC 47054 / DSM 6125 / CFBP 8728 / NCIMB 11950 / KT2440)).